The following is a 159-amino-acid chain: Na(+)/H(+) antiporter subunit E1 (159 aa).

The next 4 helical transmembrane spans lie at 1 to 21 (MAVQ…VTNS), 27 to 47 (FVLG…VLPG), 49 to 69 (FYVI…IELI), and 101 to 121 (WQIV…VLGV).

This sequence belongs to the CPA3 antiporters (TC 2.A.63) subunit E family. As to quaternary structure, may form a heterooligomeric complex that consists of seven subunits: mnhA1, mnhB1, mnhC1, mnhD1, mnhE1, mnhF1 and mnhG1.

The protein localises to the cell membrane. Functionally, mnh complex is a Na(+)/H(+) antiporter involved in Na(+) excretion. This Staphylococcus aureus (strain bovine RF122 / ET3-1) protein is Na(+)/H(+) antiporter subunit E1 (mnhE1).